Here is a 413-residue protein sequence, read N- to C-terminus: RING-H2 finger protein ATL54 (413 aa).

Residues 83–103 (ISIITITGAVLAILLTGFFLV) form a helical membrane-spanning segment. The segment at 177–219 (CPVCLNEFEEDESLRLLPKCNHAFHISCIDTWLSSHTNCPLCR) adopts an RING-type; atypical zinc-finger fold. Disordered regions lie at residues 238-258 (VTPG…EDHG) and 321-413 (THVE…VFPL). Low complexity predominate over residues 387 to 401 (SSSTLKTNGSSSSVS). Residues 402-413 (CFNKNKSSVFPL) show a composition bias toward polar residues.

This sequence belongs to the RING-type zinc finger family. ATL subfamily.

It is found in the membrane. It catalyses the reaction S-ubiquitinyl-[E2 ubiquitin-conjugating enzyme]-L-cysteine + [acceptor protein]-L-lysine = [E2 ubiquitin-conjugating enzyme]-L-cysteine + N(6)-ubiquitinyl-[acceptor protein]-L-lysine.. Its pathway is protein modification; protein ubiquitination. This is RING-H2 finger protein ATL54 (ATL54) from Arabidopsis thaliana (Mouse-ear cress).